Reading from the N-terminus, the 454-residue chain is Cell division cycle-associated 7-like protein (454 aa).

Positions 9–33 match the Integrase domain-binding motif 1 (IBM1) motif; sequence IPKEVADIFNAPSDDEEFVGFRDDV. Residue S21 is modified to Phosphoserine. The Integrase domain-binding motif 2 (IBM2) signature appears at 65–91; that stretch reads FTEELRRIFIEDTDSETEDFAGFTQSD. T77 bears the Phosphothreonine mark. At S79 the chain carries Phosphoserine. Phosphothreonine is present on residues T81 and T88. 2 disordered regions span residues 103–169 and 188–213; these read VESD…LFSS and QVIQREDSTSESEDDSRDESQESSDA. Residues S105, S108, S117, S138, S139, S162, S195, and S197 each carry the phosphoserine modification. Positions 117–126 are enriched in acidic residues; the sequence is SEEEEDEEED. Positions 213–235 are MYC-binding; that stretch reads ALLKRTMNIKENKAMLAQLLAEL. Glycyl lysine isopeptide (Lys-Gly) (interchain with G-Cter in SUMO2) cross-links involve residues K222 and K225. Position 261 is a phosphoserine (S261).

As to quaternary structure, interacts with MYC. Interacts (via IBM motifs) with PSIP1 (via IBD domain); phosphorylation increases its affinity for PSIP1. Post-translationally, phosphorylation increases its interaction with PSIP1. As to expression, ubiquitous. Overexpressed in medulloblastoma.

The protein localises to the cytoplasm. Its subcellular location is the nucleus. Its function is as follows. Plays a role in transcriptional regulation as a repressor that inhibits monoamine oxidase A (MAOA) activity and gene expression by binding to the promoter. Plays an important oncogenic role in mediating the full transforming effect of MYC in medulloblastoma cells. Involved in apoptotic signaling pathways; May act downstream of P38-kinase and BCL-2, but upstream of CASP3/caspase-3 as well as CCND1/cyclin D1 and E2F1. The sequence is that of Cell division cycle-associated 7-like protein (CDCA7L) from Homo sapiens (Human).